A 1232-amino-acid chain; its full sequence is DNA-directed RNA polymerase subunit beta (1232 aa).

The interval 1170 to 1232 is disordered; sequence SVDEDADELE…LDLDDFGDEH (63 aa). The segment covering 1171–1180 has biased composition (acidic residues); it reads VDEDADELEV. Positions 1189–1198 are enriched in basic and acidic residues; the sequence is PEEKEEKEKE. Positions 1199 to 1232 are enriched in acidic residues; it reads DSDEYDDLREEDVEPDLEELSLDDLDLDDFGDEH.

The protein belongs to the RNA polymerase beta chain family. As to quaternary structure, the RNAP catalytic core consists of 2 alpha, 1 beta, 1 beta' and 1 omega subunit. When a sigma factor is associated with the core the holoenzyme is formed, which can initiate transcription.

The enzyme catalyses RNA(n) + a ribonucleoside 5'-triphosphate = RNA(n+1) + diphosphate. In terms of biological role, DNA-dependent RNA polymerase catalyzes the transcription of DNA into RNA using the four ribonucleoside triphosphates as substrates. In Clostridium botulinum (strain Okra / Type B1), this protein is DNA-directed RNA polymerase subunit beta.